The following is a 275-amino-acid chain: Intercellular adhesion molecule 2 (275 aa).

A signal peptide spans 1–24 (MSSFGYRTLTVALFALICCPGSDE). The Extracellular segment spans residues 25-223 (KVFEVHVRPK…EIYEPVSDSQ (199 aa)). The region spanning 41–98 (KASLEVNCSTTCNQPEVGGLETSLDKILLDEQAQWKHYLVSNISHDTVLQCHFTCSGK) is the Ig-like C2-type 1 domain. N-linked (GlcNAc...) asparagine glycosylation is found at asparagine 47, asparagine 82, asparagine 105, asparagine 153, asparagine 158, asparagine 176, and asparagine 187. Cystine bridges form between cysteine 48-cysteine 91 and cysteine 52-cysteine 95. The Ig-like C2-type 2 domain maps to 127-197 (GKSFTIECRV…FSCLAVLDLI (71 aa)). A disulfide bridge links cysteine 134 with cysteine 190. A helical membrane pass occupies residues 224–248 (MVIIVTVVSVLLSLFVTSVLLCFIF). At 249–275 (GQHLRQQRMGTYGVRAAWRRLPQAFRP) the chain is on the cytoplasmic side. A required for interaction with EZR, MSN and RDX and co-localization to microvilli region spans residues 251–275 (HLRQQRMGTYGVRAAWRRLPQAFRP).

This sequence belongs to the immunoglobulin superfamily. ICAM family. As to quaternary structure, interacts with RDX, EZR and MSN.

Its subcellular location is the membrane. The protein localises to the cell projection. It localises to the microvillus. Functionally, ICAM proteins are ligands for the leukocyte adhesion protein LFA-1 (integrin alpha-L/beta-2). ICAM2 may play a role in lymphocyte recirculation by blocking LFA-1-dependent cell adhesion. It mediates adhesive interactions important for antigen-specific immune response, NK-cell mediated clearance, lymphocyte recirculation, and other cellular interactions important for immune response and surveillance. The protein is Intercellular adhesion molecule 2 (ICAM2) of Gorilla gorilla gorilla (Western lowland gorilla).